The primary structure comprises 165 residues: Peptidyl-prolyl cis-trans isomerase A (165 aa).

An N-acetylmethionine modification is found at Met1. Val2 carries the N-acetylvaline; in Peptidyl-prolyl cis-trans isomerase A, N-terminally processed modification. Positions 7–163 constitute a PPIase cyclophilin-type domain; sequence FFDIAVDGEP…KKITIADCGQ (157 aa). The residue at position 28 (Lys28) is an N6-acetyllysine; alternate. Lys28 participates in a covalent cross-link: Glycyl lysine isopeptide (Lys-Gly) (interchain with G-Cter in SUMO2); alternate. A Glycyl lysine isopeptide (Lys-Gly) (interchain with G-Cter in ubiquitin); alternate cross-link involves residue Lys28. An N6-acetyllysine mark is found at Lys44 and Lys76. The residue at position 77 (Ser77) is a Phosphoserine. Lys82 is subject to N6-acetyllysine; alternate. Lys82 participates in a covalent cross-link: Glycyl lysine isopeptide (Lys-Gly) (interchain with G-Cter in SUMO2); alternate. The residue at position 93 (Thr93) is a Phosphothreonine. N-linked (GlcNAc...) asparagine glycosylation is present at Asn108. 3 positions are modified to N6-acetyllysine: Lys125, Lys131, and Lys133.

It belongs to the cyclophilin-type PPIase family. PPIase A subfamily. As to quaternary structure, interacts with protein phosphatase PPP3CA/calcineurin A. Interacts with isoform 2 of BSG/CD147. Interacts with FOXO1; the interaction promotes FOXO1 dephosphorylation, nuclear accumulation and transcriptional activity. Interacts with integrin ITGA2B:ITGB3; the interaction is ROS and peptidyl-prolyl cis-trans isomerase (PPIase) activity-dependent and is increased in the presence of thrombin. Interacts with MAP3K5. Interacts with TARDBP; the interaction is dependent on the RNA-binding activity of TARDBP and the PPIase activity of PPIA/CYPA and the acetylation of PPIA/CYPA at Lys-125 favors the interaction. Interacts with HNRNPA1, HNRNPA2B1, HNRNPC, RBMX, HNRNPK and HNRNPM. In terms of processing, acetylation at Lys-125 markedly inhibits catalysis of cis to trans isomerization. PPIA acetylation also antagonizes the immunosuppressive effects of cyclosporine by inhibiting the sequential steps of cyclosporine binding and calcineurin inhibition. Acetylation at Lys-125 favors the interaction with TARDBP.

It localises to the cytoplasm. The protein localises to the secreted. Its subcellular location is the nucleus. It carries out the reaction [protein]-peptidylproline (omega=180) = [protein]-peptidylproline (omega=0). Its activity is regulated as follows. Binds cyclosporin A (CsA). CsA mediates some of its effects via an inhibitory action on PPIase. Functionally, catalyzes the cis-trans isomerization of proline imidic peptide bonds in oligopeptides. Exerts a strong chemotactic effect on leukocytes partly through activation of one of its membrane receptors BSG/CD147, initiating a signaling cascade that culminates in MAPK/ERK activation. Activates endothelial cells (ECs) in a proinflammatory manner by stimulating activation of NF-kappa-B and ERK, JNK and p38 MAP-kinases and by inducing expression of adhesion molecules including SELE and VCAM1. Induces apoptosis in ECs by promoting the FOXO1-dependent expression of CCL2 and BCL2L11 which are involved in EC chemotaxis and apoptosis. In response to oxidative stress, initiates proapoptotic and antiapoptotic signaling in ECs via activation of NF-kappa-B and AKT1 and up-regulation of antiapoptotic protein BCL2. Negatively regulates MAP3K5/ASK1 kinase activity, autophosphorylation and oxidative stress-induced apoptosis mediated by MAP3K5/ASK1. Necessary for the assembly of TARDBP in heterogeneous nuclear ribonucleoprotein (hnRNP) complexes and regulates TARDBP binding to RNA UG repeats and TARDBP-dependent expression of HDAC6, ATG7 and VCP which are involved in clearance of protein aggregates. Plays an important role in platelet activation and aggregation. Regulates calcium mobilization and integrin ITGA2B:ITGB3 bidirectional signaling via increased ROS production as well as by facilitating the interaction between integrin and the cell cytoskeleton. Binds heparan sulfate glycosaminoglycans. The chain is Peptidyl-prolyl cis-trans isomerase A (PPIA) from Symphalangus syndactylus (Siamang).